The chain runs to 372 residues: N-methyl-L-tryptophan oxidase (372 aa).

4–34 contacts FAD; that stretch reads DLIIIGSGSVGAAAGYYATRAGLKVLMTDAH. Cysteine 307 is subject to S-8alpha-FAD cysteine.

This sequence belongs to the MSOX/MTOX family. MTOX subfamily. Monomer. The cofactor is FAD.

The enzyme catalyses N(alpha)-methyl-L-tryptophan + O2 + H2O = L-tryptophan + formaldehyde + H2O2. Its function is as follows. Catalyzes the oxidative demethylation of N-methyl-L-tryptophan. The chain is N-methyl-L-tryptophan oxidase from Salmonella arizonae (strain ATCC BAA-731 / CDC346-86 / RSK2980).